A 1011-amino-acid polypeptide reads, in one-letter code: Protein argonaute 1C (1011 aa).

Positions 1 to 11 (MASRRPTHRHH) are enriched in basic residues. Disordered regions lie at residues 1-95 (MASR…SPLA) and 107-147 (RPSE…PLRP). 2 stretches are compositionally biased toward low complexity: residues 28–53 (ARYAQPQPQPQQQQQQQGRGCRARGA) and 61–92 (QQQQQQPRSTPTRATTVTVASSSSTTATASSS). Polar residues predominate over residues 127 to 140 (ATTTPHHIPSSSKS). The 111-residue stretch at 352 to 462 (PVIDFVAQLL…LPMEVCKIVE (111 aa)) folds into the PAZ domain. A Piwi domain is found at 638–959 (LLIGILPDNN…AAFRARFYME (322 aa)). The span at 963–982 (SDSSSVVSGPGVRGPLSGSS) shows a compositional bias: low complexity. The disordered stretch occupies residues 963-994 (SDSSSVVSGPGVRGPLSGSSTSRTRAPGGAAV).

Belongs to the argonaute family. Ago subfamily.

Its function is as follows. Probably involved in the RNA silencing pathway. May bind to short RNAs such as microRNAs (miRNAs) or short interfering RNAs (siRNAs), and represses the translation of mRNAs which are complementary to them. In Oryza sativa subsp. japonica (Rice), this protein is Protein argonaute 1C (AGO1C).